The chain runs to 124 residues: Small ribosomal subunit protein uS12 (124 aa).

Residue Asp-89 is modified to 3-methylthioaspartic acid.

It belongs to the universal ribosomal protein uS12 family. As to quaternary structure, part of the 30S ribosomal subunit. Contacts proteins S8 and S17. May interact with IF1 in the 30S initiation complex.

Functionally, with S4 and S5 plays an important role in translational accuracy. Its function is as follows. Interacts with and stabilizes bases of the 16S rRNA that are involved in tRNA selection in the A site and with the mRNA backbone. Located at the interface of the 30S and 50S subunits, it traverses the body of the 30S subunit contacting proteins on the other side and probably holding the rRNA structure together. The combined cluster of proteins S8, S12 and S17 appears to hold together the shoulder and platform of the 30S subunit. In Vibrio campbellii (strain ATCC BAA-1116), this protein is Small ribosomal subunit protein uS12.